A 296-amino-acid chain; its full sequence is Gamma-D-glutamyl-L-lysine dipeptidyl-peptidase (296 aa).

Substrate-binding positions include tyrosine 90, 199-201 (DCS), and 218-219 (DA). The NlpC/P60 domain maps to 170-295 (KGTAEDIIQT…ELCAVRRCFS (126 aa)). The active-site Nucleophile is cysteine 200. Residue histidine 253 is the Proton acceptor of the active site. The active site involves histidine 265.

The protein belongs to the peptidase C40 family.

The enzyme catalyses The enzyme releases L-Ala-gamma-D-Glu dipeptides from cell wall peptides via cleavage of an L-Ala-gamma-D-Glu-|-L-Lys bond.. It functions in the pathway cell wall degradation; peptidoglycan degradation. Its function is as follows. Specifically hydrolyzes gamma-D-glutamyl-L-lysine bonds in murein peptides, releasing L-Ala-D-Glu. The polypeptide is Gamma-D-glutamyl-L-lysine dipeptidyl-peptidase (ykfC) (Bacillus subtilis (strain 168)).